The following is a 296-amino-acid chain: Probable 6-phosphogluconolactonase 1 (296 aa).

Belongs to the glucosamine/galactosamine-6-phosphate isomerase family. 6-phosphogluconolactonase subfamily.

The catalysed reaction is 6-phospho-D-glucono-1,5-lactone + H2O = 6-phospho-D-gluconate + H(+). It participates in carbohydrate degradation; pentose phosphate pathway; D-ribulose 5-phosphate from D-glucose 6-phosphate (oxidative stage): step 2/3. Its function is as follows. Hydrolysis of 6-phosphogluconolactone to 6-phosphogluconate. This chain is Probable 6-phosphogluconolactonase 1, found in Oryza sativa subsp. japonica (Rice).